The following is a 349-amino-acid chain: Protein RecA (349 aa).

Position 65–72 (65–72 (GPESSGKT)) interacts with ATP.

The protein belongs to the RecA family.

The protein localises to the cytoplasm. Its function is as follows. Can catalyze the hydrolysis of ATP in the presence of single-stranded DNA, the ATP-dependent uptake of single-stranded DNA by duplex DNA, and the ATP-dependent hybridization of homologous single-stranded DNAs. It interacts with LexA causing its activation and leading to its autocatalytic cleavage. The protein is Protein RecA of Azotobacter vinelandii (strain DJ / ATCC BAA-1303).